A 375-amino-acid chain; its full sequence is Ribosomal RNA large subunit methyltransferase G (375 aa).

The protein belongs to the methyltransferase superfamily. RlmG family.

It is found in the cytoplasm. It catalyses the reaction guanosine(1835) in 23S rRNA + S-adenosyl-L-methionine = N(2)-methylguanosine(1835) in 23S rRNA + S-adenosyl-L-homocysteine + H(+). In terms of biological role, specifically methylates the guanine in position 1835 (m2G1835) of 23S rRNA. The polypeptide is Ribosomal RNA large subunit methyltransferase G (Erwinia tasmaniensis (strain DSM 17950 / CFBP 7177 / CIP 109463 / NCPPB 4357 / Et1/99)).